Reading from the N-terminus, the 1403-residue chain is Centrosomal protein of 162 kDa (1403 aa).

A disordered region spans residues 20–46; it reads LSDDSFENSNKTPRQPNEDNKEMKKKD. Positions 35–46 are enriched in basic and acidic residues; the sequence is PNEDNKEMKKKD. Phosphoserine occurs at positions 160 and 163. 4 disordered regions span residues 169 to 243, 256 to 292, 306 to 348, and 453 to 606; these read LHRY…MLAN, VGLS…SSGD, SLGD…ESDL, and NPSL…GGNR. Acidic residues predominate over residues 178–208; it reads PAEDGCENESEQEELPETYSDDFEDAEDADD. Residues 210–238 show a composition bias toward basic and acidic residues; the sequence is LITKDEETHPKENSESGKDSFPKQEEEKT. Positions 485–500 are enriched in basic residues; the sequence is PCKKARSTPSLPKRKP. Basic and acidic residues-rich tracts occupy residues 526-536 and 571-585; these read LEKKTSKDNTK and PHRE…RPED. Residues 614 to 1124 are a coiled coil; sequence KRAQDAEEKW…QKERRMMLSR (511 aa). The tract at residues 1126 to 1147 is disordered; sequence IPRSREETAAKRLKKDPNRGHG. Residues 1128 to 1144 show a composition bias toward basic and acidic residues; it reads RSREETAAKRLKKDPNR. Positions 1174 to 1386 form a coiled coil; it reads EENYRLRSEL…LDVLRELHRQ (213 aa).

The protein belongs to the CEP162 family. As to quaternary structure, interacts with CPNE4. Interacts with alpha-tubulin. Interacts with CEP290.

The protein localises to the cytoplasm. Its subcellular location is the cytoskeleton. It is found in the microtubule organizing center. It localises to the centrosome. The protein resides in the centriole. The protein localises to the spindle. Its subcellular location is the nucleus. Its function is as follows. Required to promote assembly of the transition zone in primary cilia. Acts by specifically recognizing and binding the axonemal microtubule. Localizes to the distal ends of centrioles before ciliogenesis and directly binds to axonemal microtubule, thereby promoting and restricting transition zone formation specifically at the cilia base. Required to mediate CEP290 association with microtubules. This Mus musculus (Mouse) protein is Centrosomal protein of 162 kDa (Cep162).